Consider the following 79-residue polypeptide: Hemoglobin subunit zeta (79 aa).

Ser1 carries the N-acetylserine modification. The Globin domain occupies 1-79; it reads SLTKTXXTII…FKLLSHXFLV (79 aa). Ser38 and Ser53 each carry phosphoserine. Heme b is bound at residue His59.

The protein belongs to the globin family. Heterotetramer of two zeta chains and two epsilon chains.

Its function is as follows. The zeta chain is an alpha-type chain of mammalian embryonic hemoglobin. This Notamacropus eugenii (Tammar wallaby) protein is Hemoglobin subunit zeta.